A 432-amino-acid chain; its full sequence is Adenylosuccinate synthetase (432 aa).

Residues 13-19 (GDEGKGK) and 41-43 (GHT) each bind GTP. The Proton acceptor role is filled by Asp-14. Asp-14 and Gly-41 together coordinate Mg(2+). IMP contacts are provided by residues 14–17 (DEGK), 39–42 (NAGH), Thr-130, Arg-144, Gln-225, Thr-240, and Arg-304. Residue His-42 is the Proton donor of the active site. 300–306 (AVTGRPR) contacts substrate. Residues Arg-306, 332–334 (KLD), and 415–417 (STG) contribute to the GTP site.

Belongs to the adenylosuccinate synthetase family. In terms of assembly, homodimer. The cofactor is Mg(2+).

The protein resides in the cytoplasm. The enzyme catalyses IMP + L-aspartate + GTP = N(6)-(1,2-dicarboxyethyl)-AMP + GDP + phosphate + 2 H(+). It participates in purine metabolism; AMP biosynthesis via de novo pathway; AMP from IMP: step 1/2. In terms of biological role, plays an important role in the de novo pathway of purine nucleotide biosynthesis. Catalyzes the first committed step in the biosynthesis of AMP from IMP. The sequence is that of Adenylosuccinate synthetase from Actinobacillus pleuropneumoniae serotype 3 (strain JL03).